Reading from the N-terminus, the 508-residue chain is UDP-N-acetylmuramyl-tripeptide synthetase (508 aa).

S35 is a UDP-N-acetyl-alpha-D-muramoyl-L-alanyl-D-glutamate binding site. An ATP-binding site is contributed by 118-124 (GTDGKSS). Residues 163-164 (ST), T190, and R200 contribute to the UDP-N-acetyl-alpha-D-muramoyl-L-alanyl-D-glutamate site. K232 carries the post-translational modification N6-carboxylysine.

It belongs to the MurCDEF family. MurE subfamily. Post-translationally, carboxylation is probably crucial for Mg(2+) binding and, consequently, for the gamma-phosphate positioning of ATP.

The protein resides in the cytoplasm. It functions in the pathway cell wall biogenesis; peptidoglycan biosynthesis. Functionally, catalyzes the addition of an amino acid to the nucleotide precursor UDP-N-acetylmuramoyl-L-alanyl-D-glutamate (UMAG) in the biosynthesis of bacterial cell-wall peptidoglycan. This Borreliella burgdorferi (strain ATCC 35210 / DSM 4680 / CIP 102532 / B31) (Borrelia burgdorferi) protein is UDP-N-acetylmuramyl-tripeptide synthetase.